The primary structure comprises 747 residues: Histone-lysine N-methyltransferase EZH1 (747 aa).

The interval 186 to 229 (YSDEDEEGHNDTSDGKQDDSKEDLPVTRKRKRHAIEGSKKSSKK) is disordered. The span at 194-211 (HNDTSDGKQDDSKEDLPV) shows a compositional bias: basic and acidic residues. Residue Lys327 forms a Glycyl lysine isopeptide (Lys-Gly) (interchain with G-Cter in SUMO2) linkage. Residues 375–421 (TSASAVAETKEGDSDRDTGNDWASSSSEANSRCQTPTKQKASPAPPQ) are disordered. Positions 382–393 (ETKEGDSDRDTG) are enriched in basic and acidic residues. Polar residues predominate over residues 395 to 414 (DWASSSSEANSRCQTPTKQK). Positions 504-606 (CRKIQLKKDN…CKVVSCKNCS (103 aa)) constitute a CXC domain. The region spanning 613–728 (KHLLLAPSDV…AGEELFFDYR (116 aa)) is the SET domain.

It belongs to the class V-like SAM-binding methyltransferase superfamily. Histone-lysine methyltransferase family. EZ subfamily. Component of the PRC2/EED-EZH1 complex, which includes EED, EZH1, SUZ12, RBBP4 and AEBP2. The PRC2/EED-EZH1 is less abundant than the PRC2/EED-EZH2 complex, has weak methyltransferase activity and compacts chromatin in the absence of the methyltransferase cofactor S-adenosyl-L-methionine (SAM). Interacts with EZHIP; the interaction blocks EZH1 methyltransferase activity.

The protein localises to the nucleus. The catalysed reaction is L-lysyl(27)-[histone H3] + 3 S-adenosyl-L-methionine = N(6),N(6),N(6)-trimethyl-L-lysyl(27)-[histone H3] + 3 S-adenosyl-L-homocysteine + 3 H(+). Its function is as follows. Polycomb group (PcG) protein. Catalytic subunit of the PRC2/EED-EZH1 complex, which methylates 'Lys-27' of histone H3, leading to transcriptional repression of the affected target gene. Able to mono-, di- and trimethylate 'Lys-27' of histone H3 to form H3K27me1, H3K27me2 and H3K27me3, respectively. Required for embryonic stem cell derivation and self-renewal, suggesting that it is involved in safeguarding embryonic stem cell identity. Compared to EZH2-containing complexes, it is less abundant in embryonic stem cells, has weak methyltransferase activity and plays a less critical role in forming H3K27me3, which is required for embryonic stem cell identity and proper differentiation. The polypeptide is Histone-lysine N-methyltransferase EZH1 (EZH1) (Bos taurus (Bovine)).